We begin with the raw amino-acid sequence, 109 residues long: UPF0060 membrane protein PCC8801_1733 (109 aa).

The next 4 helical transmembrane spans lie at 7–27 (LLYF…VWLW), 36–56 (YALL…LQTA), 58–78 (FGRV…LWGW), and 87–107 (SYDW…MYAP).

This sequence belongs to the UPF0060 family.

It localises to the cell inner membrane. This Rippkaea orientalis (strain PCC 8801 / RF-1) (Cyanothece sp. (strain PCC 8801)) protein is UPF0060 membrane protein PCC8801_1733.